Reading from the N-terminus, the 138-residue chain is MTTHNRPARVAEEFRHELSALLARGLKDPRITGFVTVTGSKMSPDLKEATVYVSIHGDERVRKDTFAGLQAAAGFLQREVSRALRLRNTPHLRFVYDESVARGDRIERLLREARTQGQEPAADVEPAPGAAPDDEAEE.

The tract at residues 112 to 138 is disordered; that stretch reads EARTQGQEPAADVEPAPGAAPDDEAEE. Residues 119 to 131 are compositionally biased toward low complexity; sequence EPAADVEPAPGAA.

The protein belongs to the RbfA family. Monomer. Binds 30S ribosomal subunits, but not 50S ribosomal subunits or 70S ribosomes.

It localises to the cytoplasm. Functionally, one of several proteins that assist in the late maturation steps of the functional core of the 30S ribosomal subunit. Associates with free 30S ribosomal subunits (but not with 30S subunits that are part of 70S ribosomes or polysomes). Required for efficient processing of 16S rRNA. May interact with the 5'-terminal helix region of 16S rRNA. The sequence is that of Ribosome-binding factor A from Anaeromyxobacter dehalogenans (strain 2CP-C).